Here is a 292-residue protein sequence, read N- to C-terminus: Bifunctional protein FolD (292 aa).

Residues G165–S167, S190, and T231 contribute to the NADP(+) site.

Belongs to the tetrahydrofolate dehydrogenase/cyclohydrolase family. As to quaternary structure, homodimer.

It carries out the reaction (6R)-5,10-methylene-5,6,7,8-tetrahydrofolate + NADP(+) = (6R)-5,10-methenyltetrahydrofolate + NADPH. The enzyme catalyses (6R)-5,10-methenyltetrahydrofolate + H2O = (6R)-10-formyltetrahydrofolate + H(+). It participates in one-carbon metabolism; tetrahydrofolate interconversion. Catalyzes the oxidation of 5,10-methylenetetrahydrofolate to 5,10-methenyltetrahydrofolate and then the hydrolysis of 5,10-methenyltetrahydrofolate to 10-formyltetrahydrofolate. The chain is Bifunctional protein FolD from Arthrobacter globiformis.